Here is a 110-residue protein sequence, read N- to C-terminus: UPF0060 membrane protein Ping_0587 (110 aa).

Helical transmembrane passes span 6–26 (IFGIFTVTAVAEIVGCYLPYL), 33–53 (SIWLLVPAAFSLAAFVWLLTL), 61–81 (TYAAYGGIYVSVALMWLWLVE), and 87–107 (MTDLLGVLICIIGMAVIMFGP).

The protein belongs to the UPF0060 family.

It is found in the cell inner membrane. This is UPF0060 membrane protein Ping_0587 from Psychromonas ingrahamii (strain DSM 17664 / CCUG 51855 / 37).